Consider the following 214-residue polypeptide: Chaperone protein TorD (214 aa).

This sequence belongs to the TorD/DmsD family. TorD subfamily.

It localises to the cytoplasm. Its function is as follows. Involved in the biogenesis of TorA. Acts on TorA before the insertion of the molybdenum cofactor and, as a result, probably favors a conformation of the apoenzyme that is competent for acquiring the cofactor. The chain is Chaperone protein TorD from Aeromonas salmonicida (strain A449).